The chain runs to 257 residues: Ribonuclease HII (257 aa).

In terms of domain architecture, RNase H type-2 spans 72 to 257; it reads TYIAGIDEVG…FAPIKDMIQK (186 aa). A divalent metal cation-binding residues include Asp-78, Glu-79, and Asp-170.

Belongs to the RNase HII family. Requires Mn(2+) as cofactor. Mg(2+) serves as cofactor.

It localises to the cytoplasm. It catalyses the reaction Endonucleolytic cleavage to 5'-phosphomonoester.. Endonuclease that specifically degrades the RNA of RNA-DNA hybrids. The chain is Ribonuclease HII from Bacillus cereus (strain B4264).